The chain runs to 192 residues: Probable molybdenum cofactor guanylyltransferase (192 aa).

GTP is bound by residues 8-10 (LAG), Lys20, Asp69, and Asp94. A Mg(2+)-binding site is contributed by Asp94.

This sequence belongs to the MobA family. The cofactor is Mg(2+).

It localises to the cytoplasm. It catalyses the reaction Mo-molybdopterin + GTP + H(+) = Mo-molybdopterin guanine dinucleotide + diphosphate. Functionally, transfers a GMP moiety from GTP to Mo-molybdopterin (Mo-MPT) cofactor (Moco or molybdenum cofactor) to form Mo-molybdopterin guanine dinucleotide (Mo-MGD) cofactor. The protein is Probable molybdenum cofactor guanylyltransferase of Pyrococcus horikoshii (strain ATCC 700860 / DSM 12428 / JCM 9974 / NBRC 100139 / OT-3).